Consider the following 67-residue polypeptide: Protein AaeX (67 aa).

The next 2 helical transmembrane spans lie at 3–23 (LFPVIVVFGLSFPPIFFELLL) and 43–63 (FVWHPALFNTALYCCLFYLIS).

Belongs to the AaeX family.

Its subcellular location is the cell membrane. The polypeptide is Protein AaeX (Salmonella agona (strain SL483)).